Reading from the N-terminus, the 495-residue chain is Putative FAD-containing monooxygenase MymA (495 aa).

Residues serine 15, glutamate 36, tryptophan 45, 56-57 (DS), and valine 104 each bind FAD.

It belongs to the FAD-binding monooxygenase family. FAD serves as cofactor.

In terms of biological role, required for maintaining the appropriate mycolic acid composition and permeability of the envelope on its exposure to acidic pH. The chain is Putative FAD-containing monooxygenase MymA (mymA) from Mycobacterium tuberculosis (strain CDC 1551 / Oshkosh).